Consider the following 842-residue polypeptide: Elongation factor 2 (842 aa).

A tr-type G domain is found at 17-253 (TNVRNMSVIA…LWGDSYFNPK (237 aa)). GTP-binding positions include 26–33 (AHVDHGKS), 158–161 (NKVD), and 213–215 (SGL). Diphthamide is present on His699.

The protein belongs to the TRAFAC class translation factor GTPase superfamily. Classic translation factor GTPase family. EF-G/EF-2 subfamily.

Its subcellular location is the cytoplasm. The enzyme catalyses GTP + H2O = GDP + phosphate + H(+). Catalyzes the GTP-dependent ribosomal translocation step during translation elongation. During this step, the ribosome changes from the pre-translocational (PRE) to the post-translocational (POST) state as the newly formed A-site-bound peptidyl-tRNA and P-site-bound deacylated tRNA move to the P and E sites, respectively. Catalyzes the coordinated movement of the two tRNA molecules, the mRNA and conformational changes in the ribosome. In Debaryomyces hansenii (strain ATCC 36239 / CBS 767 / BCRC 21394 / JCM 1990 / NBRC 0083 / IGC 2968) (Yeast), this protein is Elongation factor 2 (EFT1).